Consider the following 394-residue polypeptide: Elongation factor Tu 2 (394 aa).

The tr-type G domain maps to 10–204; it reads KPHVNVGTIG…ALDSYIPEPE (195 aa). The tract at residues 19–26 is G1; that stretch reads GHVDHGKT. 19 to 26 lines the GTP pocket; it reads GHVDHGKT. Mg(2+) is bound at residue Thr-26. The G2 stretch occupies residues 60-64; that stretch reads GITIN. The G3 stretch occupies residues 81–84; it reads DCPG. Residues 81-85 and 136-139 contribute to the GTP site; these read DCPGH and NKCD. Residues 136-139 are G4; that stretch reads NKCD. The G5 stretch occupies residues 174–176; sequence SAL.

Belongs to the TRAFAC class translation factor GTPase superfamily. Classic translation factor GTPase family. EF-Tu/EF-1A subfamily. In terms of assembly, monomer.

The protein localises to the cytoplasm. The enzyme catalyses GTP + H2O = GDP + phosphate + H(+). In terms of biological role, GTP hydrolase that promotes the GTP-dependent binding of aminoacyl-tRNA to the A-site of ribosomes during protein biosynthesis. In Shewanella oneidensis (strain ATCC 700550 / JCM 31522 / CIP 106686 / LMG 19005 / NCIMB 14063 / MR-1), this protein is Elongation factor Tu 2.